We begin with the raw amino-acid sequence, 704 residues long: Protein NPG1 (704 aa).

8 TPR repeats span residues 24–57 (NGIC…SLNF), 58–90 (EEAR…QAAI), 177–210 (SHAV…QWNL), 309–342 (IERW…HEQP), 430–463 (PDLI…TGGS), 555–588 (FEVW…KQYS), 589–622 (ASML…DGSS), and 662–695 (RKAW…EESD).

Interacts with calmodulin in a calcium-dependent manner. In terms of tissue distribution, expressed only in pollen and in pollen tubes.

In terms of biological role, calmodulin-binding protein essential for pollen germination, but not necessary for microsporogenesis or gametogenesis. This Arabidopsis thaliana (Mouse-ear cress) protein is Protein NPG1.